The following is a 33-amino-acid chain: Protamine (33 aa).

Positions Met-1–Arg-33 are disordered.

Testis.

It localises to the nucleus. The protein localises to the chromosome. Its function is as follows. Protamines substitute for histones in the chromatin of sperm during the haploid phase of spermatogenesis. They compact sperm DNA into a highly condensed, stable and inactive complex. This Oncorhynchus keta (Chum salmon) protein is Protamine.